Reading from the N-terminus, the 184-residue chain is Ribosome maturation factor RimM (184 aa).

The region spanning Pro101 to Leu174 is the PRC barrel domain.

It belongs to the RimM family. Binds ribosomal protein uS19.

The protein localises to the cytoplasm. An accessory protein needed during the final step in the assembly of 30S ribosomal subunit, possibly for assembly of the head region. Essential for efficient processing of 16S rRNA. May be needed both before and after RbfA during the maturation of 16S rRNA. It has affinity for free ribosomal 30S subunits but not for 70S ribosomes. The chain is Ribosome maturation factor RimM from Nocardioides sp. (strain ATCC BAA-499 / JS614).